A 346-amino-acid polypeptide reads, in one-letter code: Haptoglobin (346 aa).

Residues 1-18 (MRALGAVVTLLLWGQLFA) form the signal peptide. Positions 31–87 (DSCPKPPEIENGYVEHLVRYRCQHYRLRTEGDGVYTLNSEKQWVNTAAGERLPECEA) constitute a Sushi domain. Cystine bridges form between cysteine 52-cysteine 85, cysteine 89-cysteine 206, cysteine 249-cysteine 280, and cysteine 291-cysteine 321. One can recognise a Peptidase S1 domain in the interval 102 to 344 (IIGGSLDAKG…FLDWIQETMA (243 aa)). 2 N-linked (GlcNAc...) asparagine glycosylation sites follow: asparagine 147 and asparagine 181. An interaction with CD163 region spans residues 258-263 (VPEKEG).

The protein belongs to the peptidase S1 family. In terms of assembly, tetramer of two alpha and two beta chains; disulfide-linked. The hemoglobin/haptoglobin complex is composed of a haptoglobin dimer bound to two hemoglobin alpha-beta dimers. Interacts with CD163. Interacts with ERGIC3. As to expression, expressed by the liver and secreted in plasma.

The protein resides in the secreted. Its function is as follows. As a result of hemolysis, hemoglobin is found to accumulate in the kidney and is secreted in the urine. Haptoglobin captures, and combines with free plasma hemoglobin to allow hepatic recycling of heme iron and to prevent kidney damage. Haptoglobin also acts as an antioxidant, has antibacterial activity and plays a role in modulating many aspects of the acute phase response. Hemoglobin/haptoglobin complexes are rapidly cleared by the macrophage CD163 scavenger receptor expressed on the surface of liver Kupfer cells through an endocytic lysosomal degradation pathway. This is Haptoglobin (HP) from Mesocricetus auratus (Golden hamster).